The following is a 224-amino-acid chain: uncharacterized protein (224 aa).

This is an uncharacterized protein from Bacillus anthracis.